Here is a 314-residue protein sequence, read N- to C-terminus: Deoxymugineic acid synthase 1-B (314 aa).

Positions 1–22 (MGAGDKTAAGMPRIGMGTAVQG) are disordered. NADP(+) is bound at residue Asp-44. The active-site Proton donor is Tyr-49. A substrate-binding site is contributed by His-112. NADP(+) contacts are provided by residues 158-159 (AN), Gln-180, 258-266 (FDEARMREN), and 273-281 (ELTEEERRR).

The protein belongs to the aldo/keto reductase family. Mostly expressed in root tissues, observed in mesocotyl and embryonic roots, seedling roots, crown and seedling leafes, mature bracts, anthers, pistil, caryopsis and embryos.

It carries out the reaction 2'-deoxymugineate + NAD(+) = 3''-deamino-3''-oxonicotianamine + NADH + H(+). The enzyme catalyses 2'-deoxymugineate + NADP(+) = 3''-deamino-3''-oxonicotianamine + NADPH + H(+). It participates in siderophore biosynthesis. Catalyzes the reduction of a 3''-keto intermediate during the biosynthesis of 2'-deoxymugineic acid (DMA) from L-Met. Involved in the formation of phytosiderophores (MAs) belonging to the mugineic acid family and required to acquire iron. This is Deoxymugineic acid synthase 1-B from Triticum aestivum (Wheat).